Consider the following 358-residue polypeptide: Probable anti-sigma-M factor YhdL (358 aa).

The chain crosses the membrane as a helical span at residues 74-96 (ISVLAVISTLMILPLCTLGSYLY).

In terms of assembly, the N-terminus of YhdL interacts with sigma-M. YhdL interacts specifically with YhdK.

It localises to the membrane. This Bacillus subtilis (strain 168) protein is Probable anti-sigma-M factor YhdL (yhdL).